Here is a 186-residue protein sequence, read N- to C-terminus: Holliday junction branch migration complex subunit RuvA (186 aa).

The segment at 1-63 (MNDYINGLLH…DNVFKYYGFK (63 aa)) is domain I. Residues 64–137 (NQLIRDLFEL…QKELFNNKIS (74 aa)) form a domain II region. S137 is a region of interest (flexible linker). Residues 137–186 (SDKKNKVITSLEKLGYKTKDIYKIIINIDEDMNIEDLTKYVLEQLSYLHN) are domain III.

It belongs to the RuvA family. Homotetramer. Forms an RuvA(8)-RuvB(12)-Holliday junction (HJ) complex. HJ DNA is sandwiched between 2 RuvA tetramers; dsDNA enters through RuvA and exits via RuvB. An RuvB hexamer assembles on each DNA strand where it exits the tetramer. Each RuvB hexamer is contacted by two RuvA subunits (via domain III) on 2 adjacent RuvB subunits; this complex drives branch migration. In the full resolvosome a probable DNA-RuvA(4)-RuvB(12)-RuvC(2) complex forms which resolves the HJ.

Its subcellular location is the cytoplasm. Its function is as follows. The RuvA-RuvB-RuvC complex processes Holliday junction (HJ) DNA during genetic recombination and DNA repair, while the RuvA-RuvB complex plays an important role in the rescue of blocked DNA replication forks via replication fork reversal (RFR). RuvA specifically binds to HJ cruciform DNA, conferring on it an open structure. The RuvB hexamer acts as an ATP-dependent pump, pulling dsDNA into and through the RuvAB complex. HJ branch migration allows RuvC to scan DNA until it finds its consensus sequence, where it cleaves and resolves the cruciform DNA. The sequence is that of Holliday junction branch migration complex subunit RuvA from Mycoplasma mycoides subsp. mycoides SC (strain CCUG 32753 / NCTC 10114 / PG1).